The sequence spans 205 residues: Thymidylate kinase (205 aa).

10–17 (GTEGVGKS) contributes to the ATP binding site.

It belongs to the thymidylate kinase family.

The enzyme catalyses dTMP + ATP = dTDP + ADP. In terms of biological role, phosphorylation of dTMP to form dTDP in both de novo and salvage pathways of dTTP synthesis. The protein is Thymidylate kinase of Teredinibacter turnerae (strain ATCC 39867 / T7901).